Here is a 490-residue protein sequence, read N- to C-terminus: Betaine aldehyde dehydrogenase (490 aa).

T26, I27, and D93 together coordinate K(+). NAD(+) is bound at residue 150-152; it reads GAW. The active-site Charge relay system is K162. 176 to 179 serves as a coordination point for NAD(+); sequence KPSE. V180 provides a ligand contact to K(+). 230 to 233 is an NAD(+) binding site; it reads GVAS. L246 is a K(+) binding site. E252 functions as the Proton acceptor in the catalytic mechanism. Residues G254, C286, and E387 each coordinate NAD(+). Residue C286 is the Nucleophile of the active site. C286 carries the post-translational modification Cysteine sulfenic acid (-SOH). Positions 457 and 460 each coordinate K(+). Residue E464 is the Charge relay system of the active site.

The protein belongs to the aldehyde dehydrogenase family. Dimer of dimers. K(+) serves as cofactor.

It catalyses the reaction betaine aldehyde + NAD(+) + H2O = glycine betaine + NADH + 2 H(+). It functions in the pathway amine and polyamine biosynthesis; betaine biosynthesis via choline pathway; betaine from betaine aldehyde: step 1/1. Functionally, involved in the biosynthesis of the osmoprotectant glycine betaine. Catalyzes the irreversible oxidation of betaine aldehyde to the corresponding acid. In Shigella flexneri serotype 5b (strain 8401), this protein is Betaine aldehyde dehydrogenase.